Reading from the N-terminus, the 192-residue chain is Molybdenum cofactor cytidylyltransferase (192 aa).

D101 is a Mg(2+) binding site.

In terms of assembly, monomer. Interacts with the Moco-binding chaperone PaoD. The cofactor is Mg(2+). Mn(2+) is required as a cofactor.

It carries out the reaction Mo-molybdopterin + CTP + H(+) = Mo-molybdopterin cytosine dinucleotide + diphosphate. In terms of biological role, transfers a CMP moiety from CTP to Mo-molybdopterin (Mo-MPT) cofactor (Moco or molybdenum cofactor) to form Mo-molybdopterin cytosine dinucleotide (Mo-MCD) cofactor. Is specific for CTP; other nucleotides such as ATP and GTP cannot be utilized. Is also able to convert MPT to MCD in the absence of molybdate, however, with only one catalytic turnover. The sequence is that of Molybdenum cofactor cytidylyltransferase (mocA) from Escherichia coli (strain K12).